The chain runs to 395 residues: Tyrosine--tRNA ligase (395 aa).

A 'HIGH' region motif is present at residues 42–51; sequence PTAPDIHLGH. Positions 226 to 230 match the 'KMSKS' region motif; the sequence is KMSKS. Lys229 provides a ligand contact to ATP. One can recognise an S4 RNA-binding domain in the interval 334–394; that stretch reads IGLATLLKEA…GKRKFARVTV (61 aa).

It belongs to the class-I aminoacyl-tRNA synthetase family. TyrS type 2 subfamily. In terms of assembly, homodimer.

The protein resides in the cytoplasm. The catalysed reaction is tRNA(Tyr) + L-tyrosine + ATP = L-tyrosyl-tRNA(Tyr) + AMP + diphosphate + H(+). Its function is as follows. Catalyzes the attachment of tyrosine to tRNA(Tyr) in a two-step reaction: tyrosine is first activated by ATP to form Tyr-AMP and then transferred to the acceptor end of tRNA(Tyr). This Haemophilus influenzae (strain 86-028NP) protein is Tyrosine--tRNA ligase.